The primary structure comprises 238 residues: MIINAKGPASFAEKYIVRSIWENKFPPGSILPAERELSELIGVTRTTLREVLQRLARDGWLKIQHGKPTRVNNFWETSGLNILETIADLNPEGFPVLVDQLLSARTNVSAIYFRGALRYNPETAVDVLAKIHQLENTAESFAEYDYLLHHTLAFSSGNPLYVLILNGFKGLYSRVGRYYFSSAEARLLALNFYKELEVLAKAKNYTDVPALMRTYGINSGKMWLQLRDDMPASIAQDN.

The 69-residue stretch at 6-74 (KGPASFAEKY…HGKPTRVNNF (69 aa)) folds into the HTH gntR-type domain. The segment at residues 34 to 53 (ERELSELIGVTRTTLREVLQ) is a DNA-binding region (H-T-H motif).

In terms of assembly, homodimer.

It is found in the cytoplasm. Its function is as follows. Multifunctional regulator of fatty acid metabolism. The polypeptide is Fatty acid metabolism regulator protein (Shewanella putrefaciens (strain CN-32 / ATCC BAA-453)).